The following is a 334-amino-acid chain: Ficolin-1 (334 aa).

A signal peptide spans 1–17 (MQWPTLWAFSGLLCLCP). The tract at residues 47-117 (SCPGFPGPPG…SLGEKELGDT (71 aa)) is disordered. Residues 50–88 (GFPGPPGPKGEPGSPAGRGERGFQGSPGKMGPAGSKGEP) enclose the Collagen-like domain. The 218-residue stretch at 117–334 (TLCQRGPRSC…KVAEMKIRAS (218 aa)) folds into the Fibrinogen C-terminal domain. 2 disulfide bridges follow: Cys119/Cys147 and Cys126/Cys154. Positions 123-162 (PRSCKDLLTRGIFLTGWYTIHLPDCRPLTVLCDMDVDGGG) are a domain; contributes to trimerization. Residues 163–251 (WTVFQRRVDG…LTLGQFLEGT (89 aa)) are b domain; contributes to trimerization. Asn261 carries N-linked (GlcNAc...) asparagine glycosylation. 2 residues coordinate Ca(2+): Asp270 and Asp272. Residues Cys278 and Cys291 are joined by a disulfide bond. An a carbohydrate-binding site is contributed by 290-292 (NCH). The tract at residues 325-334 (KVAEMKIRAS) is p domain.

This sequence belongs to the ficolin lectin family. In terms of assembly, homotrimer. Interacts with elastin/ELN. Interacts (via Fibrinogen C-terminal domain) with FFAR2. Interacts with CRP; may regulate monocyte activation by FCN1. In terms of tissue distribution, highly expressed in liver and spleen.

It is found in the secreted. Its subcellular location is the cell membrane. In terms of biological role, extracellular lectin functioning as a pattern-recognition receptor in innate immunity. Binds the sugar moieties of pathogen-associated molecular patterns (PAMPs) displayed on microbes and activates the lectin pathway of the complement system. May also activate monocytes through a G protein-coupled receptor, FFAR2, inducing the secretion of interleukin-8/IL-8. Binds preferentially to 9-O-acetylated 2-6-linked sialic acid derivatives and to various glycans containing sialic acid engaged in a 2-3 linkage. The polypeptide is Ficolin-1 (Fcn1) (Mus musculus (Mouse)).